The primary structure comprises 201 residues: CASP-like protein 2B2 (201 aa).

The Cytoplasmic segment spans residues 1–28 (MSYLGVGVSPGNVSGSTTKMKLIDRKVR). The helical transmembrane segment at 29-49 (VTELILRCLVCVLALVAAILI) threads the bilayer. Residues 50–71 (ATDVQVREIFMIQKKAKFTDMK) lie on the Extracellular side of the membrane. Residues 72–92 (ALVLLVVVNGIAAGYSLVQAV) form a helical membrane-spanning segment. The Cytoplasmic segment spans residues 93–108 (RCVVGLMKGRVLFSKP). The chain crosses the membrane as a helical span at residues 109-129 (LAWAIFFGDQAVAYLCVAGVA). Residues 130–166 (AAAQSAAFAKLGEPELQWMKICNMYGKFCNQVGEGIA) are Extracellular-facing. The helical transmembrane segment at 167–187 (SALFACIGMVLISCISAFGVF) threads the bilayer. Residues 188–201 (RLYGGSKSRPSSRW) are Cytoplasmic-facing.

It belongs to the Casparian strip membrane proteins (CASP) family. As to quaternary structure, homodimer and heterodimers.

Its subcellular location is the cell membrane. In Arabidopsis thaliana (Mouse-ear cress), this protein is CASP-like protein 2B2.